A 211-amino-acid chain; its full sequence is Transcriptional regulatory protein LiaR (211 aa).

Residues 3-119 form the Response regulatory domain; that stretch reads RVLLIDDHEM…EIADAIRAAS (117 aa). Asp-54 bears the 4-aspartylphosphate mark. The HTH luxR-type domain maps to 143–208; the sequence is NALPHESLTK…QAAVYAHRNH (66 aa). Positions 167 to 186 form a DNA-binding region, H-T-H motif; that stretch reads NKEIGEELFITIKTVKTHIT.

In terms of processing, phosphorylated by LiaS.

It localises to the cytoplasm. Member of the two-component regulatory system LiaS/LiaR probably involved in response to a subset of cell wall-active antibiotics that interfere with the lipid II cycle in the cytoplasmic membrane (bacitracin, nisin, ramoplanin and vancomycin). Also seems to be involved in response to cationic antimicrobial peptides and secretion stress. LiaR regulates the transcription of the liaIHGFSR operon. The chain is Transcriptional regulatory protein LiaR (liaR) from Bacillus subtilis (strain 168).